The following is a 583-amino-acid chain: CD166 antigen (583 aa).

The N-terminal stretch at 1-27 (MASKVSPSCRLVFCLLISAAVLRPGLG) is a signal peptide. 2 consecutive Ig-like V-type domains span residues 28–120 (WYTV…TEDN) and 125–234 (PTLV…KTIY). Topologically, residues 28–527 (WYTVNSAYGD…NREKVNDQAK (500 aa)) are extracellular. 2 cysteine pairs are disulfide-bonded: cysteine 43–cysteine 113 and cysteine 157–cysteine 220. 8 N-linked (GlcNAc...) asparagine glycosylation sites follow: asparagine 95, asparagine 167, asparagine 265, asparagine 306, asparagine 361, asparagine 457, asparagine 480, and asparagine 499. Ig-like C2-type domains lie at 245–328 (PTEQ…TTIT), 333–409 (DLSL…ESLT), and 416–501 (PQIK…LNVS). 3 disulfide bridges follow: cysteine 270-cysteine 313, cysteine 354-cysteine 392, and cysteine 435-cysteine 485. A helical membrane pass occupies residues 528–549 (LIVGIVVGLLLAALVAGVVYWL). Residues 550–583 (YMKKSKTASKHVNKDLGNMEENKKLEENNHKTEA) lie on the Cytoplasmic side of the membrane. The interval 562-583 (NKDLGNMEENKKLEENNHKTEA) is disordered. Residues 569-583 (EENKKLEENNHKTEA) are compositionally biased toward basic and acidic residues.

Homodimer. Interacts (via extracellular domain) with CD6 (via extracellular domain). Homodimerization and interaction with CD6 involve the same region and cannot occur simultaneously. The affinity for CD6 is much higher than the affinity for self-association. Interacts (via glycosylated extracellular domain) with LGALS1 and LGALS3. Interaction with LGALS1 or LGALS3 inhibits interaction with CD6. Post-translationally, glycosylated. As to expression, detected on brain motor neurons, in differentiating retinal ganglion cells and in adult retina. Detected on leukocytes and on lymphatic endothelial cells. Detected in spleen B cells and T-cells (at protein level). Detected in adult brain and embryonic spinal cord. Expressed at high levels in the brain, and lung, and at lower levels in the liver, and the kidney, as well as by activated leukocytes.

The protein resides in the cell membrane. Its subcellular location is the cell projection. It is found in the axon. The protein localises to the dendrite. Cell adhesion molecule that mediates both heterotypic cell-cell contacts via its interaction with CD6, as well as homotypic cell-cell contacts. Promotes T-cell activation and proliferation via its interactions with CD6. Contributes to the formation and maturation of the immunological synapse via its interactions with CD6. Mediates homotypic interactions with cells that express ALCAM. Mediates attachment of dendritic cells onto endothelial cells via homotypic interaction. Inhibits endothelial cell migration and promotes endothelial tube formation via homotypic interactions. Required for normal organization of the lymph vessel network. Required for normal hematopoietic stem cell engraftment in the bone marrow. Plays a role in hematopoiesis; required for normal numbers of hematopoietic stem cells in bone marrow. Promotes in vitro osteoblast proliferation and differentiation. Promotes neurite extension, axon growth and axon guidance; axons grow preferentially on surfaces that contain ALCAM. Mediates outgrowth and pathfinding for retinal ganglion cell axons. The sequence is that of CD166 antigen (Alcam) from Mus musculus (Mouse).